A 123-amino-acid chain; its full sequence is MADETTVSTPAASGTETPSTGGGGAPQGRPQGGPRGDRGPRPGGSGRDGGRKFFRRKKVCKFCVEKIDAIDYKDVRLLGQFVAESGKIVPRRLTGVCTPHQRRLSDAIKQARNIALLPFASAR.

Residues 1–10 (MADETTVSTP) are compositionally biased toward polar residues. The segment at 1–52 (MADETTVSTPAASGTETPSTGGGGAPQGRPQGGPRGDRGPRPGGSGRDGGRK) is disordered. Residues 20–34 (TGGGGAPQGRPQGGP) show a composition bias toward gly residues.

Belongs to the bacterial ribosomal protein bS18 family. As to quaternary structure, part of the 30S ribosomal subunit. Forms a tight heterodimer with protein bS6.

In terms of biological role, binds as a heterodimer with protein bS6 to the central domain of the 16S rRNA, where it helps stabilize the platform of the 30S subunit. In Koribacter versatilis (strain Ellin345), this protein is Small ribosomal subunit protein bS18.